The primary structure comprises 250 residues: Triosephosphate isomerase (250 aa).

9 to 11 provides a ligand contact to substrate; the sequence is NWK. His-96 (electrophile) is an active-site residue. The Proton acceptor role is filled by Glu-166. Substrate contacts are provided by residues Gly-172, Ser-212, and 233 to 234; that span reads GG.

Belongs to the triosephosphate isomerase family. Homodimer.

The protein localises to the cytoplasm. It catalyses the reaction D-glyceraldehyde 3-phosphate = dihydroxyacetone phosphate. The protein operates within carbohydrate biosynthesis; gluconeogenesis. Its pathway is carbohydrate degradation; glycolysis; D-glyceraldehyde 3-phosphate from glycerone phosphate: step 1/1. Involved in the gluconeogenesis. Catalyzes stereospecifically the conversion of dihydroxyacetone phosphate (DHAP) to D-glyceraldehyde-3-phosphate (G3P). In Chlorobium phaeobacteroides (strain BS1), this protein is Triosephosphate isomerase.